Here is a 120-residue protein sequence, read N- to C-terminus: Small ribosomal subunit protein bS6 (120 aa).

Residues 97 to 112 (SNEPSPILKNQSTENT) show a composition bias toward polar residues. The interval 97–120 (SNEPSPILKNQSTENTPVIDVTAN) is disordered.

The protein belongs to the bacterial ribosomal protein bS6 family.

Binds together with bS18 to 16S ribosomal RNA. The polypeptide is Small ribosomal subunit protein bS6 (Rickettsia bellii (strain RML369-C)).